The primary structure comprises 355 residues: UDP-3-O-acylglucosamine N-acyltransferase (355 aa).

The active-site Proton acceptor is the His258.

Belongs to the transferase hexapeptide repeat family. LpxD subfamily. Homotrimer.

The enzyme catalyses a UDP-3-O-[(3R)-3-hydroxyacyl]-alpha-D-glucosamine + a (3R)-hydroxyacyl-[ACP] = a UDP-2-N,3-O-bis[(3R)-3-hydroxyacyl]-alpha-D-glucosamine + holo-[ACP] + H(+). The protein operates within bacterial outer membrane biogenesis; LPS lipid A biosynthesis. Functionally, catalyzes the N-acylation of UDP-3-O-acylglucosamine using 3-hydroxyacyl-ACP as the acyl donor. Is involved in the biosynthesis of lipid A, a phosphorylated glycolipid that anchors the lipopolysaccharide to the outer membrane of the cell. This is UDP-3-O-acylglucosamine N-acyltransferase from Bradyrhizobium sp. (strain BTAi1 / ATCC BAA-1182).